The chain runs to 182 residues: Ribosome maturation factor RimM (182 aa).

The PRC barrel domain maps to 103–182; the sequence is EDEFYWRELF…RIEVDWDPGF (80 aa).

Belongs to the RimM family. Binds ribosomal protein uS19.

It is found in the cytoplasm. In terms of biological role, an accessory protein needed during the final step in the assembly of 30S ribosomal subunit, possibly for assembly of the head region. Essential for efficient processing of 16S rRNA. May be needed both before and after RbfA during the maturation of 16S rRNA. It has affinity for free ribosomal 30S subunits but not for 70S ribosomes. The sequence is that of Ribosome maturation factor RimM from Vibrio vulnificus (strain CMCP6).